Consider the following 449-residue polypeptide: Heterogeneous nuclear ribonucleoprotein H2 (449 aa).

Methionine 1 carries the post-translational modification N-acetylmethionine. The residue at position 2 (methionine 2) is an N-acetylmethionine; in Heterogeneous nuclear ribonucleoprotein H2, N-terminally processed. Residues 11-90 (FVVKVRGLPW…RYVEVFKSNS (80 aa)) enclose the RRM 1 domain. A Phosphoserine modification is found at serine 23. Residue lysine 35 forms a Glycyl lysine isopeptide (Lys-Gly) (interchain with G-Cter in SUMO2) linkage. 2 positions are modified to phosphoserine: serine 54 and serine 63. Lysine 87 participates in a covalent cross-link: Glycyl lysine isopeptide (Lys-Gly) (interchain with G-Cter in SUMO2). Position 90 is a phosphoserine (serine 90). Residue lysine 98 forms a Glycyl lysine isopeptide (Lys-Gly) (interchain with G-Cter in SUMO2) linkage. Positions 111 to 188 (GFVRLRGLPF…RYIEIFKSSR (78 aa)) constitute an RRM 2 domain. Arginine 233 carries the post-translational modification Dimethylated arginine; alternate. The residue at position 233 (arginine 233) is an Omega-N-methylarginine; alternate. A 1-1 repeat occupies 234-249 (GAYGGGYGGYDDYGGY). Residues 234–433 (GAYGGGYGGY…YGGQSSMSGY (200 aa)) are 2 X 16 AA Gly-rich approximate repeats. Phosphotyrosine is present on tyrosine 246. Residues 289-364 (HCVHMRGLPY…RYVELFLNST (76 aa)) form the RRM 3 domain. Serine 310 is subject to Phosphoserine. A run of 3 repeats spans residues 354–372 (HRYV…GGAY), 374–392 (HSYV…GGAY), and 418–433 (GGYG…MSGY). Residues 354–392 (HRYVELFLNSTAGTSGGAYDHSYVELFLNSTAGASGGAY) are 2 X 19 AA perfect repeats.

As to quaternary structure, component of a ribonucleoprotein complex containing mRNAs and RNA-binding proteins including DDX5, HNRNPH2 and SRSF1 as well as splicing regulator ARVCF. Interacts with TXNL4/DIM1.

The protein resides in the nucleus. It localises to the nucleoplasm. This protein is a component of the heterogeneous nuclear ribonucleoprotein (hnRNP) complexes which provide the substrate for the processing events that pre-mRNAs undergo before becoming functional, translatable mRNAs in the cytoplasm. Binds poly(RG). The sequence is that of Heterogeneous nuclear ribonucleoprotein H2 (Hnrnph2) from Mus musculus (Mouse).